The primary structure comprises 414 residues: uncharacterized protein (414 aa).

The first 18 residues, 1–18 (MLKRLMLASAILPVVSFA), serve as a signal peptide directing secretion.

This is an uncharacterized protein from Aquifex aeolicus (strain VF5).